Reading from the N-terminus, the 433-residue chain is Serine--tRNA ligase (433 aa).

An L-serine-binding site is contributed by 235-237 (TSE). 266–268 (RSE) lines the ATP pocket. Residue glutamate 289 coordinates L-serine. 353 to 356 (EISS) is an ATP binding site. Serine 388 is a binding site for L-serine.

The protein belongs to the class-II aminoacyl-tRNA synthetase family. Type-1 seryl-tRNA synthetase subfamily. As to quaternary structure, homodimer. The tRNA molecule binds across the dimer.

The protein resides in the cytoplasm. The enzyme catalyses tRNA(Ser) + L-serine + ATP = L-seryl-tRNA(Ser) + AMP + diphosphate + H(+). It catalyses the reaction tRNA(Sec) + L-serine + ATP = L-seryl-tRNA(Sec) + AMP + diphosphate + H(+). It participates in aminoacyl-tRNA biosynthesis; selenocysteinyl-tRNA(Sec) biosynthesis; L-seryl-tRNA(Sec) from L-serine and tRNA(Sec): step 1/1. Its function is as follows. Catalyzes the attachment of serine to tRNA(Ser). Is also able to aminoacylate tRNA(Sec) with serine, to form the misacylated tRNA L-seryl-tRNA(Sec), which will be further converted into selenocysteinyl-tRNA(Sec). The polypeptide is Serine--tRNA ligase (Burkholderia pseudomallei (strain 668)).